We begin with the raw amino-acid sequence, 960 residues long: UPF0182 protein DSY1630 (960 aa).

A run of 7 helical transmembrane segments spans residues I7 to E27, I50 to I70, T105 to F125, F169 to I189, L212 to F232, A256 to F276, and L285 to L305. 2 disordered regions span residues S866–T899 and T924–P960. Over residues E881 to E897 the composition is skewed to acidic residues. Positions E931–Q944 are enriched in basic and acidic residues. Residues S950 to P960 are compositionally biased toward polar residues.

Belongs to the UPF0182 family.

It localises to the cell membrane. The protein is UPF0182 protein DSY1630 of Desulfitobacterium hafniense (strain Y51).